The primary structure comprises 72 residues: DNA gyrase inhibitor YacG (72 aa).

4 residues coordinate Zn(2+): C14, C17, C33, and C37.

This sequence belongs to the DNA gyrase inhibitor YacG family. In terms of assembly, interacts with GyrB. Zn(2+) is required as a cofactor.

Its function is as follows. Inhibits all the catalytic activities of DNA gyrase by preventing its interaction with DNA. Acts by binding directly to the C-terminal domain of GyrB, which probably disrupts DNA binding by the gyrase. This is DNA gyrase inhibitor YacG from Mannheimia succiniciproducens (strain KCTC 0769BP / MBEL55E).